We begin with the raw amino-acid sequence, 124 residues long: Small ribosomal subunit protein uS12 (124 aa).

Residues 1–29 (MATINQLVRKGRKRRVAKSNVPALEASPQ) form a disordered region. Residue D89 is modified to 3-methylthioaspartic acid. Positions 101-124 (AADTAGVDKRRQGRSKYGAKRPKS) are disordered. The segment covering 111–124 (RQGRSKYGAKRPKS) has biased composition (basic residues).

The protein belongs to the universal ribosomal protein uS12 family. Part of the 30S ribosomal subunit. Contacts proteins S8 and S17. May interact with IF1 in the 30S initiation complex.

In terms of biological role, with S4 and S5 plays an important role in translational accuracy. Its function is as follows. Interacts with and stabilizes bases of the 16S rRNA that are involved in tRNA selection in the A site and with the mRNA backbone. Located at the interface of the 30S and 50S subunits, it traverses the body of the 30S subunit contacting proteins on the other side and probably holding the rRNA structure together. The combined cluster of proteins S8, S12 and S17 appears to hold together the shoulder and platform of the 30S subunit. The sequence is that of Small ribosomal subunit protein uS12 from Alkalilimnicola ehrlichii (strain ATCC BAA-1101 / DSM 17681 / MLHE-1).